Reading from the N-terminus, the 555-residue chain is Cytochrome P450 monooxygenase abl2 (555 aa).

Transmembrane regions (helical) follow at residues 38–58 and 141–161; these read SFDL…ALFI and VFIG…APLA. N-linked (GlcNAc...) asparagine glycosylation is found at N325 and N360. Heme is bound at residue C489.

The protein belongs to the cytochrome P450 family. The cofactor is heme.

It localises to the membrane. Its pathway is hormone biosynthesis. Functionally, cytochrome P450 monooxygenase; part of the gene cluster that mediates the biosynthesis of abscisic acid (ABA), a phytohormone that acts antagonistically toward salicylic acid (SA), jasmonic acid (JA) and ethylene (ETH) signaling, to impede plant defense responses. The first step of the pathway catalyzes the reaction from farnesyl diphosphate to alpha-ionylideneethane performed by the alpha-ionylideneethane synthase abl3 via a three-step reaction mechanism involving 2 neutral intermediates, beta-farnesene and allofarnesene. The cytochrome P450 monooxygenase abl1 might then be involved in the conversion of alpha-ionylideneethane to alpha-ionylideneacetic acid. Alpha-ionylideneacetic acid is further converted to abscisic acid in 2 steps involving the cytochrome P450 monooxygenase abl2 and the short-chain dehydrogenase/reductase abl4, via the intermediates 1'-deoxy-ABA or 1',4'-trans-diol-ABA, depending on the order of action of these 2 enzymes. Abl2 is responsible for the hydroxylation of carbon atom C-1' and abl4 might be involved in the oxidation of the C-4' carbon atom. The polypeptide is Cytochrome P450 monooxygenase abl2 (Leptosphaeria maculans (strain JN3 / isolate v23.1.3 / race Av1-4-5-6-7-8) (Blackleg fungus)).